A 509-amino-acid polypeptide reads, in one-letter code: Kelch repeat protein M-T9 (509 aa).

Positions serine 15–aspartate 79 constitute a BTB domain. Kelch repeat units follow at residues valine 274–glycine 320, tyrosine 321–glutamate 368, tryptophan 370–asparagine 415, arginine 416–lysine 463, and isoleucine 465–isoleucine 509.

It belongs to the poxviruses Kelch family.

The polypeptide is Kelch repeat protein M-T9 (Myxoma virus (strain Lausanne) (MYXV)).